The sequence spans 257 residues: tRNA pseudouridine synthase A (257 aa).

Asp53 functions as the Nucleophile in the catalytic mechanism. Residue Tyr111 participates in substrate binding.

This sequence belongs to the tRNA pseudouridine synthase TruA family. As to quaternary structure, homodimer.

The catalysed reaction is uridine(38/39/40) in tRNA = pseudouridine(38/39/40) in tRNA. Its function is as follows. Formation of pseudouridine at positions 38, 39 and 40 in the anticodon stem and loop of transfer RNAs. The polypeptide is tRNA pseudouridine synthase A (Xylella fastidiosa (strain M12)).